A 181-amino-acid polypeptide reads, in one-letter code: Mytilin-1 (181 aa).

Residues 1–22 form the signal peptide; the sequence is MISKYCLFVIVLGTTGTALVLT.

Component of the organic matrix of calcified shell layers like nacre and prisms.

It is found in the secreted. This chain is Mytilin-1, found in Mytilus galloprovincialis (Mediterranean mussel).